The primary structure comprises 487 residues: Cytochrome P450 2C4 (487 aa).

Cys432 contributes to the heme binding site.

The protein belongs to the cytochrome P450 family. The cofactor is heme.

It localises to the endoplasmic reticulum membrane. It is found in the microsome membrane. It carries out the reaction an organic molecule + reduced [NADPH--hemoprotein reductase] + O2 = an alcohol + oxidized [NADPH--hemoprotein reductase] + H2O + H(+). Cytochromes P450 are a group of heme-thiolate monooxygenases. In liver microsomes, this enzyme is involved in an NADPH-dependent electron transport pathway. It oxidizes a variety of structurally unrelated compounds, including steroids, fatty acids, and xenobiotics. In Oryctolagus cuniculus (Rabbit), this protein is Cytochrome P450 2C4 (CYP2C4).